The sequence spans 221 residues: ATP phosphoribosyltransferase (221 aa).

It belongs to the ATP phosphoribosyltransferase family. Short subfamily. In terms of assembly, heteromultimer composed of HisG and HisZ subunits.

It localises to the cytoplasm. The catalysed reaction is 1-(5-phospho-beta-D-ribosyl)-ATP + diphosphate = 5-phospho-alpha-D-ribose 1-diphosphate + ATP. It functions in the pathway amino-acid biosynthesis; L-histidine biosynthesis; L-histidine from 5-phospho-alpha-D-ribose 1-diphosphate: step 1/9. In terms of biological role, catalyzes the condensation of ATP and 5-phosphoribose 1-diphosphate to form N'-(5'-phosphoribosyl)-ATP (PR-ATP). Has a crucial role in the pathway because the rate of histidine biosynthesis seems to be controlled primarily by regulation of HisG enzymatic activity. This Symbiobacterium thermophilum (strain DSM 24528 / JCM 14929 / IAM 14863 / T) protein is ATP phosphoribosyltransferase.